Reading from the N-terminus, the 302-residue chain is tRNA-cytidine(32) 2-sulfurtransferase (302 aa).

The PP-loop motif signature appears at 43–48 (SGGKDS). [4Fe-4S] cluster-binding residues include Cys-118, Cys-121, and Cys-209.

It belongs to the TtcA family. Homodimer. It depends on Mg(2+) as a cofactor. [4Fe-4S] cluster is required as a cofactor.

The protein localises to the cytoplasm. The catalysed reaction is cytidine(32) in tRNA + S-sulfanyl-L-cysteinyl-[cysteine desulfurase] + AH2 + ATP = 2-thiocytidine(32) in tRNA + L-cysteinyl-[cysteine desulfurase] + A + AMP + diphosphate + H(+). Its pathway is tRNA modification. Its function is as follows. Catalyzes the ATP-dependent 2-thiolation of cytidine in position 32 of tRNA, to form 2-thiocytidine (s(2)C32). The sulfur atoms are provided by the cysteine/cysteine desulfurase (IscS) system. The protein is tRNA-cytidine(32) 2-sulfurtransferase of Polynucleobacter asymbioticus (strain DSM 18221 / CIP 109841 / QLW-P1DMWA-1) (Polynucleobacter necessarius subsp. asymbioticus).